Here is a 296-residue protein sequence, read N- to C-terminus: Small ribosomal subunit biogenesis GTPase RsgA (296 aa).

In terms of domain architecture, CP-type G spans Thr-65 to Leu-226. GTP-binding positions include Thr-114–Asp-117 and Gly-169–Ser-177. Residues Cys-250, Cys-255, His-257, and Cys-263 each coordinate Zn(2+).

It belongs to the TRAFAC class YlqF/YawG GTPase family. RsgA subfamily. As to quaternary structure, monomer. Associates with 30S ribosomal subunit, binds 16S rRNA. It depends on Zn(2+) as a cofactor.

The protein localises to the cytoplasm. Its function is as follows. One of several proteins that assist in the late maturation steps of the functional core of the 30S ribosomal subunit. Helps release RbfA from mature subunits. May play a role in the assembly of ribosomal proteins into the subunit. Circularly permuted GTPase that catalyzes slow GTP hydrolysis, GTPase activity is stimulated by the 30S ribosomal subunit. The polypeptide is Small ribosomal subunit biogenesis GTPase RsgA (Bacillus velezensis (strain DSM 23117 / BGSC 10A6 / LMG 26770 / FZB42) (Bacillus amyloliquefaciens subsp. plantarum)).